A 36-amino-acid polypeptide reads, in one-letter code: HTDGIFSSDYSKYLDNRRTKDFVQWLLSTKRNGANT.

The protein belongs to the glucagon family. In terms of tissue distribution, produced by the X-cells of the islets of pancreas.

The protein resides in the secreted. Functionally, promotes hydrolysis of glycogen and lipids, and raises the blood sugar level. The chain is Glucagon (gcg) from Hydrolagus colliei (Spotted ratfish).